Here is a 310-residue protein sequence, read N- to C-terminus: Cytochrome f (310 aa).

The signal sequence occupies residues 1 to 23 (MRRLIPILLGSLVLSLSILVAPA). Residues Tyr28, Cys48, Cys51, and His52 each coordinate heme. The chain crosses the membrane as a helical span at residues 277–297 (IYGLLAFFVAVSLAQILLVLK).

This sequence belongs to the cytochrome f family. As to quaternary structure, the 4 large subunits of the cytochrome b6-f complex are cytochrome b6, subunit IV (17 kDa polypeptide, PetD), cytochrome f and the Rieske protein, while the 4 small subunits are PetG, PetL, PetM and PetN. The complex functions as a dimer. It depends on heme as a cofactor.

The protein resides in the cellular thylakoid membrane. Its function is as follows. Component of the cytochrome b6-f complex, which mediates electron transfer between photosystem II (PSII) and photosystem I (PSI), cyclic electron flow around PSI, and state transitions. The polypeptide is Cytochrome f (Prochlorococcus marinus (strain MIT 9313)).